We begin with the raw amino-acid sequence, 76 residues long: Small ribosomal subunit protein bS18 (76 aa).

The protein belongs to the bacterial ribosomal protein bS18 family. Part of the 30S ribosomal subunit. Forms a tight heterodimer with protein bS6.

In terms of biological role, binds as a heterodimer with protein bS6 to the central domain of the 16S rRNA, where it helps stabilize the platform of the 30S subunit. The protein is Small ribosomal subunit protein bS18 of Methylococcus capsulatus (strain ATCC 33009 / NCIMB 11132 / Bath).